A 251-amino-acid chain; its full sequence is MHSSYSLSKCLVCFTILAIQTLIRRVSSLNRTNAYLNHKCLVIQGKYKRQSEYEENLNYIIDHISSTQKFPDGFTHTSRGEAPNFVTIVFQCRGDSYGSKCRSCYATPISGIRRRCQGYKGAIIWDQCFLDISTINSPPTMIDYENTFSMHNQNNVNEDAESFNKKTRDFLYNLMLKADKPKAGSYAAGEMRLGTKNLYAMVQCALDIFECKVCLEWSINELSKCCHSKKGARFLGTSCNIRYELYPFLST.

A signal peptide spans 1 to 28; it reads MHSSYSLSKCLVCFTILAIQTLIRRVSS. 2 Gnk2-homologous domains span residues 35-139 and 144-248; these read YLNH…NSPP and YENT…LYPF.

This sequence belongs to the cysteine-rich repeat secretory protein family.

Its subcellular location is the secreted. The sequence is that of Putative cysteine-rich repeat secretory protein 36 (CRRSP36) from Arabidopsis thaliana (Mouse-ear cress).